Consider the following 105-residue polypeptide: Nitrogenase-stabilizing/protective protein NifW 2 (105 aa).

It belongs to the NifW family.

In terms of biological role, may protect the nitrogenase Fe-Mo protein from oxidative damage. In Trichormus variabilis (strain ATCC 29413 / PCC 7937) (Anabaena variabilis), this protein is Nitrogenase-stabilizing/protective protein NifW 2 (nifW2).